The following is a 151-amino-acid chain: Ribonuclease H (151 aa).

In terms of domain architecture, RNase H type-1 spans 1–146 (MPDLYAYTDG…ADELARAGMA (146 aa)). Mg(2+) contacts are provided by D9, E52, D74, and D138.

The protein belongs to the RNase H family. As to quaternary structure, monomer. Requires Mg(2+) as cofactor.

Its subcellular location is the cytoplasm. It carries out the reaction Endonucleolytic cleavage to 5'-phosphomonoester.. In terms of biological role, endonuclease that specifically degrades the RNA of RNA-DNA hybrids. This is Ribonuclease H from Cereibacter sphaeroides (strain ATCC 17029 / ATH 2.4.9) (Rhodobacter sphaeroides).